Reading from the N-terminus, the 198-residue chain is uncharacterized protein (198 aa).

In terms of domain architecture, HTH tetR-type spans 11–71 (EGTHKAILSA…DSFLSTATDR (61 aa)). Residues 34-53 (TVDKIAERAKVSKATIYKWW) constitute a DNA-binding region (H-T-H motif).

This is an uncharacterized protein from Bacillus subtilis (strain 168).